The chain runs to 137 residues: MMPKRTKFRKQQKGQFAGLSKGATFVDFGEFGMQTLERGWVTSRQIEACRIAINRYLKRRGKVWIRIFPDKSVTKKPAETRMGKGKGAPDHWVAVVRPGRILFEVANVSREDAQDALRRAAAKLGIRTRFVKRVERV.

Belongs to the universal ribosomal protein uL16 family. As to quaternary structure, part of the 50S ribosomal subunit.

Functionally, binds 23S rRNA and is also seen to make contacts with the A and possibly P site tRNAs. The chain is Large ribosomal subunit protein uL16 from Chlamydia abortus (strain DSM 27085 / S26/3) (Chlamydophila abortus).